The primary structure comprises 480 residues: tRNA-2-methylthio-N(6)-dimethylallyladenosine synthase (480 aa).

An MTTase N-terminal domain is found at 29 to 145; that stretch reads GSFWIQTFGC…LEALLTQVDN (117 aa). 6 residues coordinate [4Fe-4S] cluster: Cys-38, Cys-74, Cys-108, Cys-180, Cys-184, and Cys-187. The Radical SAM core domain maps to 166-403; the sequence is RDSTICAWVN…NALVERVALQ (238 aa). In terms of domain architecture, TRAM spans 406–474; it reads SRYSGKVEQV…AFSLSGTPCD (69 aa).

The protein belongs to the methylthiotransferase family. MiaB subfamily. As to quaternary structure, monomer. The cofactor is [4Fe-4S] cluster.

Its subcellular location is the cytoplasm. It catalyses the reaction N(6)-dimethylallyladenosine(37) in tRNA + (sulfur carrier)-SH + AH2 + 2 S-adenosyl-L-methionine = 2-methylsulfanyl-N(6)-dimethylallyladenosine(37) in tRNA + (sulfur carrier)-H + 5'-deoxyadenosine + L-methionine + A + S-adenosyl-L-homocysteine + 2 H(+). Its function is as follows. Catalyzes the methylthiolation of N6-(dimethylallyl)adenosine (i(6)A), leading to the formation of 2-methylthio-N6-(dimethylallyl)adenosine (ms(2)i(6)A) at position 37 in tRNAs that read codons beginning with uridine. In Prochlorococcus marinus (strain MIT 9303), this protein is tRNA-2-methylthio-N(6)-dimethylallyladenosine synthase.